The chain runs to 232 residues: DOA4-independent degradation protein 4 (232 aa).

The stretch at 14-97 (PQERLKKNQR…AISLRIQAVR (84 aa)) forms a coiled coil. The interaction with VPS4 stretch occupies residues 183–232 (LQSTPQNLVSNAPIAETAMGIPEPIGAGSEFHGNPDDDLQARLNTLKKQT). Residues 203–232 (IPEPIGAGSEFHGNPDDDLQARLNTLKKQT) are disordered. The MIT-interacting motif signature appears at 219-229 (DDLQARLNTLK).

It belongs to the SNF7 family. Core component of the ESCRT-III complex (endosomal sorting required for transport complex III). ESCRT-III appears to be sequentially assembled as a flat lattice on the endosome membrane and forms a transient 450 kDa complex that contains DID4, oligomerized SNF7, VPS20 and VPS24. SNF7 oligomerization into a membrane-associated filament is nucleated by association of SNF7 with VPS20; the process is terminated through association of VPS24, possibly by capping the SNF7 filament. VPS24 subsequently associates with DID4/VPS2.

Its subcellular location is the cytoplasm. The protein localises to the endosome membrane. Functionally, required for the sorting and concentration of proteins resulting in the entry of these proteins into the invaginating vesicles of the multivesicular body (MVB). Acts a component of the ESCRT-III complex, which appears to be critical for late steps in MVB sorting, such as membrane invagination and final cargo sorting and recruitment of late-acting components of the sorting machinery. The MVB pathway requires the sequential function of ESCRT-O, -I,-II and -III complex assemblies. Can directly stimulate VPS4 ATPase activity. The DID4/VPS2-VPS24 subcomplex is required for the VPS4-dependent dissociation of ESCRT-III. The protein is DOA4-independent degradation protein 4 (DID4) of Saccharomyces cerevisiae (strain ATCC 204508 / S288c) (Baker's yeast).